A 298-amino-acid chain; its full sequence is MGGASSPRIPSRRSAPYFTSLAFFGSSYIKVKNNRNKMLNPTDAASVALSFSVPFQMSGENPLSKLVEHCNKFVPGADIKMKAEPAKPESLLLPTDMNAYSPYLATPNWWVDQTGWPQLYPTVTTASSVDVYQNYLASSQLGGLLSSSVSAVASQLPAGINAQSALNITSQQRTIAKSFQHTKPMASSSSIPSVLTASNSSANSLVSSGSESVSARGTSGSGGTGKYPSSRTANKCECPNCHEIEKFGPNAIAARKRGVHNCHIAGCGKVYNKSSHLKAHLRWHSGERQMKKRSGDSS.

The segment covering 206 to 218 (VSSGSESVSARGT) has biased composition (low complexity). A disordered region spans residues 206–233 (VSSGSESVSARGTSGSGGTGKYPSSRTA). The C2H2-type zinc finger occupies 260 to 284 (HNCHIAGCGKVYNKSSHLKAHLRWH).

This sequence belongs to the Sp1 C2H2-type zinc-finger protein family. As to expression, expressed in ASJ sensory neurons, pharyngeal cells, rectal cells, intestine, seam cells, and vulval cells.

Its function is as follows. Probable transcription factor which modulates gene expression, thereby acting as an ASJ sensory neuron terminal selector gene. This Caenorhabditis elegans protein is Specificity protein transcription factor 1.